The following is a 666-amino-acid chain: Protein OS-9 (666 aa).

The signal sequence occupies residues 1 to 30 (MAAEALLSSLLGLLFLGLLLPAHLTGGVGS). One can recognise an MRH domain in the interval 108-230 (APCLLKTKDW…SIRTSRLCPH (123 aa)). Cysteine 110 and cysteine 123 are oxidised to a cystine. A mannooligosaccharide derivative-binding residues include tryptophan 117, tryptophan 118, and glutamine 130. N-linked (GlcNAc...) asparagine glycosylation occurs at asparagine 177. Cystine bridges form between cysteine 181/cysteine 216 and cysteine 196/cysteine 228. Residues aspartate 182, arginine 188, glutamate 212, and tyrosine 218 each coordinate a mannooligosaccharide derivative. Disordered regions lie at residues 261-356 (RQAE…NVQV), 370-449 (EELK…SDRE), 505-540 (ESQSPELVQKYKKRRVVPQKPPPSPHPTEEEPEHRV), and 631-666 (EANKERQRQSELESNYRRVWGSPGGEDTGDLDEFDF). Composition is skewed to basic and acidic residues over residues 263 to 281 (AESKQHEEKVTEEVQDTDH) and 294 to 310 (PKKEDVSPTKEDKESEF). Over residues 320-332 (QATGTEEAQAGEQ) the composition is skewed to low complexity. Composition is skewed to basic and acidic residues over residues 370–379 (EELKGAEKGK) and 395–412 (PQREAEAKGKGGEPRGLV). Acidic residues predominate over residues 413–429 (EEEDGDEEEEDEDEDEQ). The span at 434-449 (EFEKELEGMLLPSDRE) shows a compositional bias: basic and acidic residues. Positions 631 to 646 (EANKERQRQSELESNY) are enriched in basic and acidic residues. Residues 657-666 (DTGDLDEFDF) are compositionally biased toward acidic residues.

It belongs to the OS-9 family. Component of the HRD1 complex, which comprises at least SYNV1/HRD1, DERL1/2, FAM8A1, HERPUD1/HERP, OS9, SEL1L and UBE2J1. FAM8A1 is stabilized by interaction with SYNV1, which prevents its proteasomal degradation. OS9 and UBE2J1 recruitment to the complex may be mediated by SEL1L. Through this complex, may interact with ERLEC1 and HSPA5. Interacts (via C-terminus) with CPNE6 (via second C2 domain); this interaction occurs in a calcium-dependent manner in vitro. Interacts with CREB3. Intramolecular disulfide bonds.

Its subcellular location is the endoplasmic reticulum lumen. Functionally, lectin component of the HRD1 complex, which functions in endoplasmic reticulum (ER) quality control and ER-associated degradation (ERAD). Specifically recognizes and binds improperly folded glycoproteins as well as hyperglycosylated proteins, retain them in the ER, and transfers them to the ubiquitination machinery and promote their degradation. Possible targets include TRPV4 as well as hyperglycosylated HSP90B1. The chain is Protein OS-9 (Os9) from Rattus norvegicus (Rat).